The primary structure comprises 142 residues: ATP synthase epsilon chain (142 aa).

The protein belongs to the ATPase epsilon chain family. In terms of assembly, F-type ATPases have 2 components, CF(1) - the catalytic core - and CF(0) - the membrane proton channel. CF(1) has five subunits: alpha(3), beta(3), gamma(1), delta(1), epsilon(1). CF(0) has three main subunits: a, b and c.

It is found in the cell inner membrane. Produces ATP from ADP in the presence of a proton gradient across the membrane. The sequence is that of ATP synthase epsilon chain from Histophilus somni (strain 2336) (Haemophilus somnus).